Here is a 1585-residue protein sequence, read N- to C-terminus: Sterol 3-beta-glucosyltransferase (1585 aa).

Over residues 1-18 the composition is skewed to pro residues; that stretch reads MSPPISPTPPPLQPPFPP. Disordered stretches follow at residues 1–151, 177–225, and 249–279; these read MSPP…ESSF, PWEE…PTHT, and YQYA…LPKG. Polar residues-rich tracts occupy residues 65–92, 105–123, and 132–148; these read DQAT…NAIT, DAQT…STHE, and PRTS…QMAE. Acidic residues predominate over residues 178 to 194; that stretch reads WEEDDDSDDGEDDDEFI. A compositionally biased stretch (low complexity) spans 255–273; it reads ETSSRRTSAAGSESSSEGE. The region spanning 387–555 is the GRAM 1 domain; sequence ERLMEVFGLE…EAIVDVEKSP (169 aa). The region spanning 438–530 is the PH domain; sequence LLVKSGPLHK…WVKAIQKVMF (93 aa). 2 disordered regions span residues 625 to 645 and 666 to 852; these read TSHA…LGMA and DGEP…GSES. Positions 670-689 are enriched in basic and acidic residues; that stretch reads LEEHSQGPHHNDEDASHLPH. Composition is skewed to polar residues over residues 760-785, 806-817, and 827-840; these read TDSS…QASV, NKPSVVDSNSAE, and SWTS…QMVK. Residues 862–933 enclose the GRAM 2 domain; the sequence is RKFRTFFALS…RDLYGLKAQK (72 aa). Residues Ser-1043, Arg-1044, Asp-1046, Ile-1358, His-1360, His-1373, Gly-1377, Thr-1378, Asp-1397, and Gln-1398 each coordinate UDP-alpha-D-glucose. Positions 1499–1552 are disordered; that stretch reads NRVRSRSRSRSRSSQGRFSPRRHTVDDDGWSVVSGGSRSRSGSASAVTSPERRP. The segment covering 1529–1545 has biased composition (low complexity); that stretch reads SVVSGGSRSRSGSASAV.

The protein belongs to the glycosyltransferase 28 family.

The protein localises to the cytoplasm. Its subcellular location is the membrane. It catalyses the reaction a sterol + UDP-alpha-D-glucose = a sterol 3-beta-D-glucoside + UDP + H(+). The catalysed reaction is ergosterol + UDP-alpha-D-glucose = ergosteryl 3-beta-D-glucoside + UDP + H(+). Functionally, sterol glycosyltransferase responsible for the glycosylation of ergosterol to form ergosterol-glucoside. This is Sterol 3-beta-glucosyltransferase from Cryptococcus neoformans var. neoformans serotype D (strain B-3501A) (Filobasidiella neoformans).